The primary structure comprises 521 residues: Fucosyltransferase 3 (521 aa).

Basic and acidic residues predominate over residues 1–12 (MKRGKKNSDAGD). Positions 1–29 (MKRGKKNSDAGDRLTNSDTRTGSSELNAM) are disordered. The Cytoplasmic portion of the chain corresponds to 1 to 39 (MKRGKKNSDAGDRLTNSDTRTGSSELNAMMKPSLSSMKT). Over residues 14-26 (LTNSDTRTGSSEL) the composition is skewed to polar residues. Residues 40-60 (MGLLLAVLMVASVMFSLSVVL) traverse the membrane as a helical; Signal-anchor for type II membrane protein segment. The Lumenal segment spans residues 61–521 (RDPPSDDVIE…QATLFHGCKD (461 aa)). Asn152, Asn222, and Asn493 each carry an N-linked (GlcNAc...) asparagine glycan.

This sequence belongs to the glycosyltransferase 37 family. Expressed in roots, stems, leaves, flowers, siliques and seedlings.

It localises to the golgi apparatus. It is found in the golgi stack membrane. It functions in the pathway protein modification; protein glycosylation. Its function is as follows. May be involved in cell wall biosynthesis. May act as a fucosyltransferase. In Arabidopsis thaliana (Mouse-ear cress), this protein is Fucosyltransferase 3 (FUT3).